Here is a 410-residue protein sequence, read N- to C-terminus: MTEETHPDDDSYIVRVKAVVMTRDDSSGGWFPQEGGGISRVGVCKVMHPEGNGRSGFLIHGERQKDKLVVLECYVRKDLVYTKANPTFHHWKVDNRKFGLTFQSPADARAFDRGVRKAIEDLIEGSTTSSSTLHNEAELGDDDVFTTATDSSSNSSQKREPTTRTISSPTSCEHRKIYTLDPYPMDHYHPDQRLPRSYPQVTFPEDDEEIVRINPREKIWMTGYEDYRHAPVRGKYLDTTEDADSYVRFAKGEVPKHEYTYPYVDSSDFGFGEDPKGSVIKTQPPRAKSRRRKENGERSRCVYCRDMFNHEENRRGHCQDAPDAVRTCIRRVSCMWCADSMLYHCMSDPEGDYTDPCSCDTSDEKFCLRWMALIALSFLAPCMCCYLPLRACHRCGVMCRCCGGKHKAAA.

A WH1 domain is found at 5-122 (THPDDDSYIV…RGVRKAIEDL (118 aa)). The segment at 127-171 (TTSSSTLHNEAELGDDDVFTTATDSSSNSSQKREPTTRTISSPTS) is disordered. The segment covering 146–156 (TTATDSSSNSS) has biased composition (polar residues). The KBD domain maps to 197–252 (SYPQVTFPEDDEEIVRINPREKIWMTGYEDYRHAPVRGKYLDTTEDADSYVRFAKG). Residues Tyr-224 and Tyr-227 each carry the phosphotyrosine modification. A disordered region spans residues 274–294 (DPKGSVIKTQPPRAKSRRRKE). The region spanning 300 to 408 (RCVYCRDMFN…CRCCGGKHKA (109 aa)) is the SPR domain.

In terms of assembly, homodimer and heterodimer. Able to interact with SPRED1 to form heterodimers. Interacts with RAS. May interact with ZDHHC13 (via ANK repeats) and ZDHHC17 (via ANK repeats). Interacts with TESK1. Interacts with NF1. Post-translationally, phosphorylated on serine and threonine residues. Phosphorylated on tyrosine. Phosphorylation of Tyr-224 and Tyr-227 are required for ubiquitination. Ubiquitinated; leading to degradation by the proteasome. In terms of tissue distribution, predominantly expressed in lung, liver and testis. In testis, it is specially found in mature spermatids projecting into the lumen of the seminiferous. Strongly expressed in glandular epithelia. Also expressed in embryonic tissues such as heart, lung, liver and brain.

Its subcellular location is the cell membrane. It is found in the cytoplasmic vesicle. The protein localises to the secretory vesicle membrane. It localises to the cytoplasm. Negatively regulates Ras signaling pathways and downstream activation of MAP kinases. Recruits and translocates NF1 to the cell membrane, thereby enabling NF1-dependent hydrolysis of active GTP-bound Ras to inactive GDP-bound Ras. Inhibits fibroblast growth factor (FGF)-induced retinal lens fiber differentiation, probably by inhibiting FGF-mediated phosphorylation of ERK1/2. Inhibits TGFB-induced epithelial-to-mesenchymal transition in lens epithelial cells. The sequence is that of Sprouty-related, EVH1 domain-containing protein 2 (Spred2) from Mus musculus (Mouse).